The following is a 418-amino-acid chain: MAQESVMFSDVSVDFSQEEWECLNDDQRDLYRDVMLENYSNLVSMGHSISKPNVISYLEQGKEPWLADRELTRGQWPVLESRCETKKLFLKKEIYEIESTQWEIMEKLTRRDFQCSSFRDDWECNRQFKKELGSQGGHFNQLVFTHEDLPTLSHHPSFTLQQIINSKKKFCASKEYRKTFRHGSQFATHEIIHTIEKPYECKECGKSFRHPSRLTHHQKIHTGKKPFECKECGKTFICGSDLTRHHRIHTGEKPYECKECGKAFSSGSNFTRHQRIHTGEKPYECKECGKAFSSGSNFTQHQRIHTGEKPYECKECGNAFSQSSQLIKHQRIHTGEKPYECKECEKAFRSGSDLTRHQRIHTGEKPYECKICGKAYSQSSQLISHHRIHTSEKPYEYRECGKNFNYDPQLIQHQNLYW.

The 72-residue stretch at 6–77 (VMFSDVSVDF…DRELTRGQWP (72 aa)) folds into the KRAB domain. The C2H2-type 1; degenerate zinc finger occupies 169 to 193 (KFCASKEYRKTFRHGSQFATHEIIH). 7 C2H2-type zinc fingers span residues 199–221 (YECKECGKSFRHPSRLTHHQKIH), 227–249 (FECKECGKTFICGSDLTRHHRIH), 255–277 (YECKECGKAFSSGSNFTRHQRIH), 283–305 (YECKECGKAFSSGSNFTQHQRIH), 311–333 (YECKECGNAFSQSSQLIKHQRIH), 339–361 (YECKECEKAFRSGSDLTRHQRIH), and 367–389 (YECKICGKAYSQSSQLISHHRIH). Glycyl lysine isopeptide (Lys-Gly) (interchain with G-Cter in SUMO2) cross-links involve residues Lys-314 and Lys-328.

This sequence belongs to the krueppel C2H2-type zinc-finger protein family.

The protein resides in the nucleus. In terms of biological role, may be involved in transcriptional regulation. This Homo sapiens (Human) protein is Zinc finger protein 566 (ZNF566).